Here is a 591-residue protein sequence, read N- to C-terminus: MIVLPNKVRIFINDRMKKDIYLGISNFGFENDIDEILGIAHLLEHLLISFDSTNFLANASTSRSYMSFWCKSINSATESDAIRTLVSWFFSNGKLKDNFSLSSIRFHIKELENEYYFRNEVFHCMDILTFLSGGDLYNGGRIDMIDNLNIVRDMLVNRMQRISGSNIVIFVKRLGPGTLDFFKQTFGSLPSCPEIIPSSIPVSTNGKIVMTPAPFYTVMVRINPTLDNILGILYLYETYHLIDYETIGNQLYLTVSFIDETEYESFLRGEAILQISQCQSINMNYSDDYMMNIYLNFPWLSHDLYDYITRINDDSKSILISLTNEIYTSIINRDIIVIYPNFSKAMCNTRDTQQHQIVVLDATNDGLIKKPYRSIPLMKRLTSNEIFIRYGDASLMDMITLSLSKQDISLKRNAEGIRVKHSFSADDIQAIMESDSFLKYSRSKPAAMYQYIFLSFFASGNSIDDILTNRDSTLEFSKRTKSKILFGRNTRYDITAKSSFVCGIVRGKSLDKTSLVEMMWDLKKKGLIYSMEFTNLLSKNTFYLFTFTIYTDEVYDYLNNNKLFSAKCLVVSTKGDVENFSSLKKDVVIRF.

Zn(2+) is bound at residue His41. Glu44 is a catalytic residue. Zn(2+) contacts are provided by His45 and Glu112.

Belongs to the peptidase M44 family. It depends on Zn(2+) as a cofactor. Post-translationally, undergoes proteolytic processing during the course of infection. May be cleaved into 46 kDa and 22 kDa products (Potential).

It localises to the virion. Probably involved in maturation of some viral proteins by processing them preferentially at Ala-Gly-|-Ser/Thr/Lys motifs. Does not seem to be responsible for the cleavage of major core proteins. In Monkeypox virus, this protein is Metalloendopeptidase OPG085 (OPG085).